The chain runs to 186 residues: Large ribosomal subunit protein uL5 (186 aa).

Belongs to the universal ribosomal protein uL5 family. Part of the 50S ribosomal subunit; part of the 5S rRNA/L5/L18/L25 subcomplex. Contacts the 5S rRNA and the P site tRNA. Forms a bridge to the 30S subunit in the 70S ribosome.

This is one of the proteins that bind and probably mediate the attachment of the 5S RNA into the large ribosomal subunit, where it forms part of the central protuberance. In the 70S ribosome it contacts protein S13 of the 30S subunit (bridge B1b), connecting the 2 subunits; this bridge is implicated in subunit movement. Contacts the P site tRNA; the 5S rRNA and some of its associated proteins might help stabilize positioning of ribosome-bound tRNAs. The chain is Large ribosomal subunit protein uL5 from Maricaulis maris (strain MCS10) (Caulobacter maris).